The chain runs to 513 residues: Probable hydrolase YhcX (513 aa).

In terms of domain architecture, N-acetyltransferase spans 14 to 212 (MVIRNIEEKD…YATLMEWNNV (199 aa)). The CN hydrolase domain maps to 229–484 (VRICVIQYEM…EMVVIGDVDL (256 aa)). The active-site Proton acceptor is Glu270. The active-site Proton donor is the Lys345. Cys379 serves as the catalytic Nucleophile.

This sequence belongs to the carbon-nitrogen hydrolase superfamily. NIT1/NIT2 family.

The polypeptide is Probable hydrolase YhcX (yhcX) (Bacillus subtilis (strain 168)).